The sequence spans 641 residues: DEAD-box ATP-dependent RNA helicase 50 (641 aa).

Disordered regions lie at residues 86-115, 129-189, and 197-216; these read SMPS…IGNF, RSAH…LNSV, and DDLD…WGNI. The segment covering 150–159 has biased composition (acidic residues); it reads PSDESDEDGT. Residues 240–268 carry the Q motif motif; sequence RSFKEIGCSDEILGALRSFGFPRPSHIQA. Positions 271-452 constitute a Helicase ATP-binding domain; that stretch reads YRPVLEGKSC…VETFPDCELI (182 aa). 284–291 contributes to the ATP binding site; sequence DQSGSGKT. The short motif at 399 to 402 is the DEAD box element; it reads DEVD. Positions 487–641 constitute a Helicase C-terminal domain; that stretch reads NKKSALVKII…GHPLHDVPCV (155 aa).

This sequence belongs to the DEAD box helicase family.

The catalysed reaction is ATP + H2O = ADP + phosphate + H(+). Probably involved in resistance to biotic and abiotic stresses. Confers tolerance to oxidative stress and mediates pathogenesis-related (PR) genes expression. Exhibits RNA-dependent ATPase and ATP-dependent RNA helicase activities in vitro. This chain is DEAD-box ATP-dependent RNA helicase 50, found in Oryza sativa subsp. japonica (Rice).